Here is a 429-residue protein sequence, read N- to C-terminus: UDP-N-acetylglucosamine 1-carboxyvinyltransferase (429 aa).

22–23 (KN) contacts phosphoenolpyruvate. Arginine 102 contacts UDP-N-acetyl-alpha-D-glucosamine. Cysteine 126 (proton donor) is an active-site residue. Position 126 is a 2-(S-cysteinyl)pyruvic acid O-phosphothioketal (cysteine 126). Residues 131–135 (RPVDL), aspartate 316, and isoleucine 338 contribute to the UDP-N-acetyl-alpha-D-glucosamine site.

The protein belongs to the EPSP synthase family. MurA subfamily.

It is found in the cytoplasm. The catalysed reaction is phosphoenolpyruvate + UDP-N-acetyl-alpha-D-glucosamine = UDP-N-acetyl-3-O-(1-carboxyvinyl)-alpha-D-glucosamine + phosphate. Its pathway is cell wall biogenesis; peptidoglycan biosynthesis. Functionally, cell wall formation. Adds enolpyruvyl to UDP-N-acetylglucosamine. The polypeptide is UDP-N-acetylglucosamine 1-carboxyvinyltransferase (Rhodopseudomonas palustris (strain HaA2)).